The chain runs to 197 residues: Putative manganese efflux pump MntP 1 (197 aa).

The next 6 helical transmembrane spans lie at 8–28 (VILL…GLGA), 43–63 (VYAA…GYLL), 66–86 (VLLG…LILL), 123–143 (LAIA…LLAL), 146–166 (WLAC…GIYL), and 176–196 (DKAE…VMFI).

Belongs to the MntP (TC 9.B.29) family.

It localises to the cell inner membrane. Functionally, probably functions as a manganese efflux pump. The protein is Putative manganese efflux pump MntP 1 of Psychrobacter cryohalolentis (strain ATCC BAA-1226 / DSM 17306 / VKM B-2378 / K5).